Here is a 93-residue protein sequence, read N- to C-terminus: Alpha-defensin 7 (93 aa).

Positions 1-19 (MKTLILLSALVLLAFQVQA) are cleaved as a signal peptide. Residues 20–58 (DPIQNTDEETKTEEQPGEDDQAVSVSFGDPEGSSLQEES) constitute a propeptide that is removed on maturation. The segment at 22–56 (IQNTDEETKTEEQPGEDDQAVSVSFGDPEGSSLQE) is disordered. 3 disulfides stabilise this stretch: C64–C92, C66–C81, and C71–C91.

This sequence belongs to the alpha-defensin family. In terms of tissue distribution, paneth cells of the small bowel.

It is found in the secreted. In terms of biological role, probably contributes to the antimicrobial barrier function of the small bowel mucosa. The sequence is that of Alpha-defensin 7 (Defa7) from Mus musculus (Mouse).